The following is a 263-amino-acid chain: Proliferating cell nuclear antigen (263 aa).

A DNA-binding region spans residues 61–80 (RCDRTINLGLSLANMSKALK).

Belongs to the PCNA family. As to quaternary structure, homotrimer. Forms a complex with activator 1 heteropentamer in the presence of ATP.

It localises to the nucleus. Its function is as follows. This protein is an auxiliary protein of DNA polymerase delta and is involved in the control of eukaryotic DNA replication by increasing the polymerase's processibility during elongation of the leading strand. The sequence is that of Proliferating cell nuclear antigen (pcn-1) from Caenorhabditis elegans.